A 435-amino-acid polypeptide reads, in one-letter code: Cytochrome c biogenesis protein Ccs1 (435 aa).

Transmembrane regions (helical) follow at residues 17–37, 77–97, and 163–183; these read LSLSISLLLLIASISIIGTII, NPCFVLVLVLFFCSLLACTFS, and IAPIVVHFSIILTFIGSLISL.

It belongs to the Ccs1/CcsB family. As to quaternary structure, may interact with CcsA.

Its subcellular location is the plastid. The protein localises to the chloroplast thylakoid membrane. Required during biogenesis of c-type cytochromes (cytochrome c6 and cytochrome f) at the step of heme attachment. The polypeptide is Cytochrome c biogenesis protein Ccs1 (Gracilaria tenuistipitata var. liui (Red alga)).